The following is a 434-amino-acid chain: ATP phosphoribosyltransferase regulatory subunit (434 aa).

The segment at 1–48 (MYGRGSGAEHSRGSGAEHFWDPRPEASSTVSSSLRPPSGARDLLPREV) is disordered. Over residues 27–38 (SSTVSSSLRPPS) the composition is skewed to low complexity.

Belongs to the class-II aminoacyl-tRNA synthetase family. HisZ subfamily. Heteromultimer composed of HisG and HisZ subunits.

Its subcellular location is the cytoplasm. It participates in amino-acid biosynthesis; L-histidine biosynthesis; L-histidine from 5-phospho-alpha-D-ribose 1-diphosphate: step 1/9. Required for the first step of histidine biosynthesis. May allow the feedback regulation of ATP phosphoribosyltransferase activity by histidine. This is ATP phosphoribosyltransferase regulatory subunit from Synechococcus sp. (strain JA-2-3B'a(2-13)) (Cyanobacteria bacterium Yellowstone B-Prime).